A 128-amino-acid chain; its full sequence is MCSGVCICLLLAMLSASSKAHQATGSLGEDAVGTEMDQLNLSQLPRYARASSAGQKKSFQRTDGDQRSNIGNALVKYLQQSRKAGPSGRYVVLPNRPIFDQSHRINDRDYMGWMDFGRRSAEEYEYSS.

The N-terminal stretch at 1–20 (MCSGVCICLLLAMLSASSKA) is a signal peptide. A propeptide spanning residues 21 to 108 (HQATGSLGED…FDQSHRINDR (88 aa)) is cleaved from the precursor. A disordered region spans residues 47 to 67 (YARASSAGQKKSFQRTDGDQR). Residue Y110 is modified to Sulfotyrosine. A Phenylalanine amide modification is found at F116. Positions 120–128 (SAEEYEYSS) are excised as a propeptide.

It belongs to the gastrin/cholecystokinin family. In terms of processing, the precursor is cleaved by proteases to produce a number of active cholecystokinins. As to expression, brain and gastrointestinal tract.

The protein resides in the secreted. The sequence is that of Cholecystokinin B (cck-b) from Xenopus laevis (African clawed frog).